The sequence spans 188 residues: MKVAVIYFGGQYNHLIVKDLKYLGLEAVAITPDKSVEELKEFDSVVFGGGPYSVINELDKMGFAPDYVKSLNVPKLGICLGHQLIAKVLGGEVRKANKPEYGLTTVNIVDEDTILRGLKPSIKAWESHNDEVVRPPSGFRILASSENAKVQAMVNNDNSIFGVQFHPEVKHTEKGIEVFKNFIKICRK.

The 187-residue stretch at 2-188 (KVAVIYFGGQ…FKNFIKICRK (187 aa)) folds into the Glutamine amidotransferase type-1 domain. Cysteine 79 serves as the catalytic Nucleophile. Residues histidine 166 and glutamate 168 contribute to the active site.

Heterodimer composed of a glutamine amidotransferase subunit (A) and a GMP-binding subunit (B).

The enzyme catalyses XMP + L-glutamine + ATP + H2O = GMP + L-glutamate + AMP + diphosphate + 2 H(+). It functions in the pathway purine metabolism; GMP biosynthesis; GMP from XMP (L-Gln route): step 1/1. Catalyzes the synthesis of GMP from XMP. The chain is GMP synthase [glutamine-hydrolyzing] subunit A from Sulfolobus acidocaldarius (strain ATCC 33909 / DSM 639 / JCM 8929 / NBRC 15157 / NCIMB 11770).